The sequence spans 355 residues: Glucose-6-phosphatase 2 (355 aa).

At 1-24 (MDFLHRNGVLIIQHLQKDYRAYYT) the chain is on the lumenal side. Residues 25 to 45 (FLNFMSNVGDPRNIFFIYFPL) form a helical membrane-spanning segment. Residues 46 to 56 (CFQFNQTVGTK) lie on the Cytoplasmic side of the membrane. A helical transmembrane segment spans residues 57 to 77 (MIWVAVIGDWLNLIFKWILFG). Topologically, residues 78–115 (HRPYWWVQETQIYPNHSSPCLEQFPTTCETGPGSPSGH) are lumenal. R79 serves as a coordination point for substrate. An N-linked (GlcNAc...) asparagine glycan is attached at N92. Residue H115 is the Proton donor of the active site. A helical membrane pass occupies residues 116 to 136 (AMGASCVWYVMVTAALSHTVC). At 137 to 146 (GMDKFSITLH) the chain is on the cytoplasmic side. A helical membrane pass occupies residues 147-167 (RLTWSFLWSVFWLIQISVCIS). R168 is a topological domain (lumenal). Position 168 (R168) interacts with substrate. A helical transmembrane segment spans residues 169–189 (VFIATHFPHQVILGVIGGMLV). The active-site Nucleophile is the H174. The Cytoplasmic segment spans residues 190–211 (AEAFEHTPGIQTASLGTYLKTN). A helical transmembrane segment spans residues 212 to 232 (LFLFLFAVGFYLLLRVLNIDL). At 233 to 261 (LWSVPIAKKWCANPDWIHIDTTPFAGLVR) the chain is on the lumenal side. A helical transmembrane segment spans residues 262–282 (NLGVLFGLGFAINSEMFLLSC). The Cytoplasmic portion of the chain corresponds to 283-293 (RGGNNYTLSFR). Residues 294–314 (LLCALTSLTILQLYHFLQIPT) form a helical membrane-spanning segment. Residues 315–318 (HEEH) lie on the Lumenal side of the membrane. A helical transmembrane segment spans residues 319 to 339 (LFYVLSFCKSASIPLTVVAFI). Topologically, residues 340-355 (PYSVHMLMKQSGKKSQ) are cytoplasmic. The Prevents secretion from ER signature appears at 352 to 355 (KKSQ).

This sequence belongs to the glucose-6-phosphatase family. N-glycosylated; the non-glycosylated form is more unstable and is degraded through the proteasome. In terms of tissue distribution, specifically expressed in pancreas and also detected to a lower extent in testis. Expressed by most islet cells in the pancreas (at protein level).

The protein localises to the endoplasmic reticulum membrane. It catalyses the reaction D-glucose 6-phosphate + H2O = D-glucose + phosphate. The protein operates within carbohydrate biosynthesis; gluconeogenesis. In terms of biological role, may hydrolyze glucose-6-phosphate to glucose in the endoplasmic reticulum. May be responsible for glucose production through glycogenolysis and gluconeogenesis. The sequence is that of Glucose-6-phosphatase 2 (G6PC2) from Homo sapiens (Human).